A 118-amino-acid chain; its full sequence is Large ribosomal subunit protein bL20 (118 aa).

Belongs to the bacterial ribosomal protein bL20 family.

Functionally, binds directly to 23S ribosomal RNA and is necessary for the in vitro assembly process of the 50S ribosomal subunit. It is not involved in the protein synthesizing functions of that subunit. This chain is Large ribosomal subunit protein bL20, found in Kosmotoga olearia (strain ATCC BAA-1733 / DSM 21960 / TBF 19.5.1).